Reading from the N-terminus, the 133-residue chain is Small ribosomal subunit protein uS11 (133 aa).

The disordered stretch occupies residues Met-1–Leu-22. Over residues Gly-7 to Lys-17 the composition is skewed to basic residues.

Belongs to the universal ribosomal protein uS11 family. As to quaternary structure, part of the 30S ribosomal subunit. Interacts with proteins S7 and S18. Binds to IF-3.

Located on the platform of the 30S subunit, it bridges several disparate RNA helices of the 16S rRNA. Forms part of the Shine-Dalgarno cleft in the 70S ribosome. The sequence is that of Small ribosomal subunit protein uS11 from Renibacterium salmoninarum (strain ATCC 33209 / DSM 20767 / JCM 11484 / NBRC 15589 / NCIMB 2235).